A 121-amino-acid chain; its full sequence is Large ribosomal subunit protein uL14 (121 aa).

Belongs to the universal ribosomal protein uL14 family. Part of the 50S ribosomal subunit. Forms a cluster with proteins L3 and L19. In the 70S ribosome, L14 and L19 interact and together make contacts with the 16S rRNA in bridges B5 and B8.

Functionally, binds to 23S rRNA. Forms part of two intersubunit bridges in the 70S ribosome. This chain is Large ribosomal subunit protein uL14, found in Prochlorococcus marinus (strain MIT 9301).